Reading from the N-terminus, the 149-residue chain is Protein DOWN-REGULATED IN DIF1 11 (149 aa).

Positions 1–22 (MEKAILITFLIATTSMVYQTIG) are cleaved as a signal peptide.

Mostly expressed in embryo sac cells. Restricted to synergid cells, especially in the filiform apparatus of mature female gametophyte, via MYB98-mediated transcription regulation. Also detected at low levels in egg and central cells.

The sequence is that of Protein DOWN-REGULATED IN DIF1 11 from Arabidopsis thaliana (Mouse-ear cress).